The chain runs to 338 residues: Mitoferrin-1 (338 aa).

Residues 1–37 (MELRRGGVGNQAAGRRMDGDCRDGGCGSKDAGSEDYE) form a disordered region. Solcar repeat units lie at residues 43-131 (ASVS…MKRT), 141-225 (NSHL…LQEQ), and 232-326 (YNPQ…FKYI). 6 consecutive transmembrane segments (helical) span residues 45–64 (VSTHMTAGAMAGILEHSIMY), 106–125 (GLNVMMMGAGPAHAMYFACY), 143–162 (HLANGVAGSMATLLHDAVMN), 200–219 (SYTTQLTMNIPFQSIHFITY), 234–253 (PQSHIISGGLAGALAAAATT), and 301–320 (GIQARVIYQMPSTAISWSVY).

This sequence belongs to the mitochondrial carrier (TC 2.A.29) family. Interacts with ACB10; this interaction stabilizes SLC25A37 and enhances the function of SLC25A37 to import mitochondrial iron during erythroid differentiation. Highly expressed in hematopoietic organs, fetal liver, bone marrow and spleen.

The protein resides in the mitochondrion inner membrane. The enzyme catalyses Fe(2+)(in) = Fe(2+)(out). Functionally, mitochondrial iron transporter that specifically mediates iron uptake in developing erythroid cells, thereby playing an essential role in heme biosynthesis. This Mus musculus (Mouse) protein is Mitoferrin-1 (Slc25a37).